The following is a 352-amino-acid chain: Alanine racemase (352 aa).

The active-site Proton acceptor; specific for D-alanine is the Lys-33. Position 33 is an N6-(pyridoxal phosphate)lysine (Lys-33). Residue Arg-129 participates in substrate binding. Tyr-250 acts as the Proton acceptor; specific for L-alanine in catalysis. Met-298 provides a ligand contact to substrate.

It belongs to the alanine racemase family. The cofactor is pyridoxal 5'-phosphate.

The catalysed reaction is L-alanine = D-alanine. It participates in amino-acid biosynthesis; D-alanine biosynthesis; D-alanine from L-alanine: step 1/1. Its function is as follows. Catalyzes the interconversion of L-alanine and D-alanine. May also act on other amino acids. The polypeptide is Alanine racemase (alr) (Neisseria meningitidis serogroup A / serotype 4A (strain DSM 15465 / Z2491)).